Reading from the N-terminus, the 627-residue chain is Serine/threonine-protein kinase Nek5 (627 aa).

The region spanning 4-255 is the Protein kinase domain; it reads FHLIKIIGEG…VTSLLKRPFL (252 aa). ATP-binding positions include 10-18 and Lys33; that span reads IGEGTFGKV. Asp124 (proton acceptor) is an active-site residue. A compositionally biased stretch (acidic residues) spans 563–580; that stretch reads QLEPGSDEDDIKFEESED. 2 disordered regions span residues 563–582 and 591–627; these read QLEP…EDEL and EKLA…KKLQ. Over residues 609 to 619 the composition is skewed to basic and acidic residues; the sequence is NAEEPGEKEKT.

It belongs to the protein kinase superfamily. NEK Ser/Thr protein kinase family. NIMA subfamily. It depends on Mg(2+) as a cofactor.

The protein resides in the cell projection. The protein localises to the cilium. Its subcellular location is the flagellum. The catalysed reaction is L-seryl-[protein] + ATP = O-phospho-L-seryl-[protein] + ADP + H(+). The enzyme catalyses L-threonyl-[protein] + ATP = O-phospho-L-threonyl-[protein] + ADP + H(+). This chain is Serine/threonine-protein kinase Nek5 (Nek5), found in Mus musculus (Mouse).